A 316-amino-acid polypeptide reads, in one-letter code: tRNA dimethylallyltransferase (316 aa).

17-24 (GPTASGKT) lines the ATP pocket. A substrate-binding site is contributed by 19–24 (TASGKT). Interaction with substrate tRNA stretches follow at residues 42-45 (DSAL), 166-170 (QRLSR), 247-252 (RCVGYR), and 280-287 (KRQITWLR).

Belongs to the IPP transferase family. In terms of assembly, monomer. The cofactor is Mg(2+).

It catalyses the reaction adenosine(37) in tRNA + dimethylallyl diphosphate = N(6)-dimethylallyladenosine(37) in tRNA + diphosphate. In terms of biological role, catalyzes the transfer of a dimethylallyl group onto the adenine at position 37 in tRNAs that read codons beginning with uridine, leading to the formation of N6-(dimethylallyl)adenosine (i(6)A). The protein is tRNA dimethylallyltransferase of Cronobacter sakazakii (strain ATCC BAA-894) (Enterobacter sakazakii).